A 134-amino-acid chain; its full sequence is Calvin cycle protein CP12-3, chloroplastic (134 aa).

Residues 1-21 (MISGSATASHGRVLLPSQRER) form a disordered region. The transit peptide at 1–42 (MISGSATASHGRVLLPSQRERRPVSTGSNILRFRETVPRQFS) directs the protein to the chloroplast. Cystine bridges form between cysteine 78–cysteine 87 and cysteine 120–cysteine 129.

The protein belongs to the CP12 family. Monomer. Component of a complex that contains two dimers of PRK, two tetramers of GAPDH and CP12. CP12 associates with GAPDH, causing its conformation to change. This GAPDH/CP12 complex binds PRK to form a half-complex (one unit). This unit probably dimerizes due partially to interactions between the enzymes of each unit. Contains two disulfide bonds; only the oxidized protein, with two disulfide bonds, is active in complex formation. The C-terminal disulfide is involved in the interaction with GAPDH and the N-terminal disulfide mediates the binding of PRK with this binary complex. As to expression, mostly expressed, at low levels, in stems and, to a lesser extent, in leaves and roots.

The protein localises to the plastid. It localises to the chloroplast. Acts as a linker essential in the assembly of a core complex of PRK/GAPDH. Coordinates the reversible inactivation of chloroplast enzymes GAPDH and PRK during darkness in photosynthetic tissues. This is Calvin cycle protein CP12-3, chloroplastic (CP12-3) from Arabidopsis thaliana (Mouse-ear cress).